The following is a 486-amino-acid chain: Small ribosomal subunit protein uS17B (486 aa).

The segment at 1-112 (MRDIGINGIK…IENKSNINFV (112 aa)) is 30S ribosomal protein S17. Positions 113-486 (DNLLNVDDKW…ELWTRKNYKS (374 aa)) are unknown.

Belongs to the universal ribosomal protein uS17 family. Part of the 30S ribosomal subunit.

In terms of biological role, one of the primary rRNA binding proteins, it binds specifically to the 5'-end of 16S ribosomal RNA. This is Small ribosomal subunit protein uS17B from Methanosarcina acetivorans (strain ATCC 35395 / DSM 2834 / JCM 12185 / C2A).